A 432-amino-acid polypeptide reads, in one-letter code: Adenylosuccinate synthetase (432 aa).

GTP-binding positions include 13–19 (GDEGKGK) and 41–43 (GHT). Catalysis depends on D14, which acts as the Proton acceptor. Residues D14 and G41 each coordinate Mg(2+). Residues 14-17 (DEGK), 39-42 (NAGH), T130, R144, Q225, T240, and R304 contribute to the IMP site. The Proton donor role is filled by H42. 300 to 306 (AVTGRPR) provides a ligand contact to substrate. Residues R306, 332–334 (KLD), and 415–417 (STG) each bind GTP.

The protein belongs to the adenylosuccinate synthetase family. Homodimer. Mg(2+) serves as cofactor.

The protein localises to the cytoplasm. It carries out the reaction IMP + L-aspartate + GTP = N(6)-(1,2-dicarboxyethyl)-AMP + GDP + phosphate + 2 H(+). It functions in the pathway purine metabolism; AMP biosynthesis via de novo pathway; AMP from IMP: step 1/2. Plays an important role in the de novo pathway of purine nucleotide biosynthesis. Catalyzes the first committed step in the biosynthesis of AMP from IMP. The protein is Adenylosuccinate synthetase of Haemophilus influenzae (strain ATCC 51907 / DSM 11121 / KW20 / Rd).